Here is a 714-residue protein sequence, read N- to C-terminus: Centromere/kinetochore protein zw10 (714 aa).

It belongs to the ZW10 family.

The protein localises to the cytoplasm. It is found in the nucleus. Its subcellular location is the chromosome. It localises to the centromere. The protein resides in the kinetochore. Its function is as follows. Required for accurate chromosome segregation. The polypeptide is Centromere/kinetochore protein zw10 (mit(1)15) (Drosophila grimshawi (Hawaiian fruit fly)).